Here is a 1460-residue protein sequence, read N- to C-terminus: Actin cytoskeleton-regulatory complex protein PAN1 (1460 aa).

A compositionally biased stretch (low complexity) spans 1-56 (MYNPYQQQGMGYQQQQQQQQQQPNGFYPQQQQGQSSNQPQGQPQPQQQMAFNQPQA). The segment at 1-151 (MYNPYQQQGM…SIQPQGTGYY (151 aa)) is disordered. Over residues 65 to 79 (SFGNSFSTMPQQPQT) the composition is skewed to polar residues. 3 stretches are compositionally biased toward low complexity: residues 80-110 (GYNN…VKPQ), 117-128 (NSSMPMMNTTGT), and 136-146 (QQPQLQSIQPQ). 5 tandem repeats follow at residues 142 to 153 (SIQPQGTGYYQS), 164 to 175 (PLQSQGTGYYVS), 188 to 199 (PLQAQGTGYYQS), 215 to 226 (PLKPQQTGFYLQ), and 235 to 246 (PLKPTATGFVNS). The interval 142–568 (SIQPQGTGYY…TAQKTGFGNN (427 aa)) is 15 X 12 AA tandem repeats of [SPNAG]-[IL]-[QKNGT]-[PSA]-[QT]-[GQAPISTLYK]-T-G-[YFGML]-[YVMGAQL]-[QVLNPAG]-[ASQPN]. Over residues 185 to 197 (TQQPLQAQGTGYY) the composition is skewed to polar residues. The disordered stretch occupies residues 185–214 (TQQPLQAQGTGYYQSQPQQVPPPQQAQSLQ). A Phosphothreonine modification is found at threonine 241. EF-hand domains lie at 269-304 (QDQA…SGLP) and 306-338 (SQLA…INDV). The 90-residue stretch at 270–359 (DQAKFETLFR…SKTKNEVSSF (90 aa)) folds into the EH 1 domain. Tandem repeats lie at residues 328-350 (FALA…ELDS), 392-403 (NLQPQPTGYMPQ), 409-420 (PLQSQITGGGVA), 422-433 (ALNPQSTGFMAP), 446-457 (GLNPQITGGAPA), 467-478 (ALQPQTTGMMPQ), 491-502 (NLGPQLTGGALQ), 503-511 (SQYTGGYGS), 531-541 (GLQSQLTGLQP), 542-549 (QPTGFLPP), and 557-568 (PLTAQKTGFGNN). A 2 X 23 AA repeats of F-A-L-[AG]-M-H-L-[IV]-[NY]-[DG]-[VK]-L-[QN]-G-[DK]-[TP]-I-P-[YN]-[EV]-L-[DP]-S region spans residues 328–672 (FALAMHLIND…GKPIPNVLPS (345 aa)). Threonine 563 carries the post-translational modification Phosphothreonine. One can recognise an EH 2 domain in the interval 593–681 (EKSLFYKFLK…SSLIPSSTKL (89 aa)). The 36-residue stretch at 625–660 (LNRADLEQIWNLCDINNTGQLNKQEFALGMHLVYGK) folds into the EF-hand 3 domain. Aspartate 638, asparagine 640, threonine 642, glutamine 644, and glutamate 649 together coordinate Ca(2+). The 2-2 repeat unit spans residues 650-672 (FALGMHLVYGKLNGKPIPNVLPS). Disordered stretches follow at residues 729–758 (SAKN…TDDI), 880–901 (ALTG…QQSA), 969–1127 (NSNK…EKRL), and 1149–1460 (LRKQ…PPLP). The span at 735 to 757 (QSSFSSPSAKSVNHSSSTLQTDD) shows a compositional bias: polar residues. 2 positions are modified to phosphoserine: serine 739 and serine 749. Over residues 888 to 899 (SEDSLSMEDEQQ) the composition is skewed to acidic residues. Positions 973–988 (SVTESSPFVPSSTPTP) are enriched in low complexity. Phosphothreonine is present on residues threonine 985 and threonine 987. Position 995 is a phosphoserine (serine 995). The span at 1003-1030 (TAEERAAYLKEQAKKRMKEKLAKFDKNR) shows a compositional bias: basic and acidic residues. Polar residues predominate over residues 1048–1058 (QPQQIAGSSNL). Repeat copies occupy residues 1076 to 1081 (QPTQPV), 1082 to 1087 (QSTQPV), 1088 to 1093 (QPTQPV), 1094 to 1099 (QPTQPV), and 1100 to 1105 (QPTQPV). Residues 1076–1105 (QPTQPVQSTQPVQPTQPVQPTQPVQPTQPV) form a 5 X 6 AA tandem repeats of Q-[PS]-T-Q-P-V region. The span at 1076–1106 (QPTQPVQSTQPVQPTQPVQPTQPVQPTQPVQ) shows a compositional bias: low complexity. Positions 1111–1170 (AKQESDDEDEDDEEKRLQEELKRLKLKKKADKEKRLAALRKQIEDAQNESDEEETNGKDN) form a coiled coil. Phosphoserine is present on serine 1160. Positions 1175-1188 (VNVPQAAPVAPSAA) are enriched in low complexity. Polar residues predominate over residues 1210–1221 (KNSTGLPSTTMG). Low complexity predominate over residues 1228 to 1239 (DASASSTSTFDA). Phosphoserine is present on residues serine 1230 and serine 1233. Positions 1240 to 1252 (RAAEMQRRIQRGL) are enriched in basic and acidic residues. Residues 1253-1265 (DEDEDDGWSDEDE) show a composition bias toward acidic residues. The residue at position 1261 (serine 1261) is a Phosphoserine. Residues 1272-1288 (VDNKVEEAKIGHPDHAR) are compositionally biased toward basic and acidic residues. Residues 1289–1298 (APPVTAAPLP) show a composition bias toward low complexity. 8 tandem repeats follow at residues 1295–1300 (APLPSV), 1301–1306 (TPVPPA), 1307–1312 (VPVPQA), 1320–1325 (SPIPIA), 1326–1330 (PIPPS), 1335–1340 (PPVPLA), 1341–1346 (PPLPAV), and 1352–1357 (PPIPSA). An 8 X 6 AA repeats of [ATVSP]-P-[LVI]-P-[SPQILA]-[VAS] region spans residues 1295-1357 (APLPSVTPVP…GFQEPPIPSA (63 aa)). Composition is skewed to pro residues over residues 1299-1308 (SVTPVPPAVP) and 1323-1344 (PIAP…PPLP). Threonine 1301 carries the post-translational modification Phosphothreonine. Pro residues predominate over residues 1447-1460 (SIPPAGIPPPPPLP).

It belongs to the PAN1 family. As to quaternary structure, component of the PAN1 actin cytoskeleton-regulatory complex. Phosphorylated by PRK1 on threonine residues in the L-x-x-Q-x-T-G motif of repeats 1-6 to 1-15. Phosphorylated by ARK1.

The protein localises to the cell membrane. It is found in the endosome membrane. The protein resides in the cytoplasm. Its subcellular location is the cytoskeleton. It localises to the actin patch. Its function is as follows. Component of the PAN1 actin cytoskeleton-regulatory complex required for the internalization of endosomes during actin-coupled endocytosis. The complex links the site of endocytosis to the cell membrane-associated actin cytoskeleton. Mediates uptake of external molecules and vacuolar degradation of plasma membrane proteins. Plays a role in the proper organization of the cell membrane-associated actin cytoskeleton and promotes its destabilization. The polypeptide is Actin cytoskeleton-regulatory complex protein PAN1 (PAN1) (Saccharomyces cerevisiae (strain YJM789) (Baker's yeast)).